A 254-amino-acid chain; its full sequence is Acetylglutamate kinase (254 aa).

Substrate-binding positions include 40 to 41 (GG), R62, and N154.

Belongs to the acetylglutamate kinase family. ArgB subfamily.

It is found in the cytoplasm. The enzyme catalyses N-acetyl-L-glutamate + ATP = N-acetyl-L-glutamyl 5-phosphate + ADP. Its pathway is amino-acid biosynthesis; L-arginine biosynthesis; N(2)-acetyl-L-ornithine from L-glutamate: step 2/4. In terms of biological role, catalyzes the ATP-dependent phosphorylation of N-acetyl-L-glutamate. The protein is Acetylglutamate kinase of Staphylococcus aureus (strain Mu3 / ATCC 700698).